The chain runs to 598 residues: Elongation factor 4 (598 aa).

In terms of domain architecture, tr-type G spans 2–184; sequence KNIRNFSIIA…EIVRKIPAPE (183 aa). Residues 14 to 19 and 131 to 134 each bind GTP; these read DHGKST and NKID.

Belongs to the TRAFAC class translation factor GTPase superfamily. Classic translation factor GTPase family. LepA subfamily.

It is found in the cell inner membrane. It carries out the reaction GTP + H2O = GDP + phosphate + H(+). Functionally, required for accurate and efficient protein synthesis under certain stress conditions. May act as a fidelity factor of the translation reaction, by catalyzing a one-codon backward translocation of tRNAs on improperly translocated ribosomes. Back-translocation proceeds from a post-translocation (POST) complex to a pre-translocation (PRE) complex, thus giving elongation factor G a second chance to translocate the tRNAs correctly. Binds to ribosomes in a GTP-dependent manner. The protein is Elongation factor 4 of Histophilus somni (strain 2336) (Haemophilus somnus).